The chain runs to 40 residues: Esterase-4 (40 aa).

This sequence belongs to the type-B carboxylesterase/lipase family.

The catalysed reaction is a carboxylic ester + H2O = an alcohol + a carboxylate + H(+). This Drosophila mojavensis (Fruit fly) protein is Esterase-4 (Est-4).